Consider the following 151-residue polypeptide: D-aminoacyl-tRNA deacylase (151 aa).

Positions 136 to 137 (GP) match the Gly-cisPro motif, important for rejection of L-amino acids motif.

This sequence belongs to the DTD family. In terms of assembly, homodimer.

The protein localises to the cytoplasm. It carries out the reaction glycyl-tRNA(Ala) + H2O = tRNA(Ala) + glycine + H(+). The catalysed reaction is a D-aminoacyl-tRNA + H2O = a tRNA + a D-alpha-amino acid + H(+). Its function is as follows. An aminoacyl-tRNA editing enzyme that deacylates mischarged D-aminoacyl-tRNAs. Also deacylates mischarged glycyl-tRNA(Ala), protecting cells against glycine mischarging by AlaRS. Acts via tRNA-based rather than protein-based catalysis; rejects L-amino acids rather than detecting D-amino acids in the active site. By recycling D-aminoacyl-tRNA to D-amino acids and free tRNA molecules, this enzyme counteracts the toxicity associated with the formation of D-aminoacyl-tRNA entities in vivo and helps enforce protein L-homochirality. This is D-aminoacyl-tRNA deacylase from Lactococcus lactis subsp. lactis (strain IL1403) (Streptococcus lactis).